Here is a 726-residue protein sequence, read N- to C-terminus: MPRRKKKIKEASEGQNLEKKDLETTSSVSIKKKRRLEDLFIVISDSDGEETKEENGLQKMKTKQSNRSKCLAKRKIAQMSEEEQFALALKMSEQEAKEVNNQEEKEEELLRKAIAESLNSRWSSDASAARPRPLSTGPSSHPHQDSTKDSGTTEGIWQLAPPSLCKGSQISQGNEAEEGKEPWDHSENPEEEPLSGSSGSQDQSSRPVFENEKVKCFDRCTGHLAEHTQCGKPQESTGSGCAFPKAVQGRGDTSRQCLPTPADTKGLQDIGGTVHYYWGVPFCPAGVDPDQYTSVILCQLEVYQKSLKMAQRQLVKKRGFGEPVLPRPPFLIQNECGQEEQTSEKHEGLSEDVRAGAREERQGSGASVWHSETKDSQKSPITSLKQRLLLEEEPTTGRGQSSQGLFVEETSEEVLKSSEGDDAVPASQSIAVLTSKRDLVLMPEASTEEVTVCPETQLSSFEPLDLNGEDSVDGREIPTELGMTVSNRQVDNREAGKDSRPPAVSASARVSCPLCNQDFPPTKIEQHAMYCTGLMEPETVLTRRRREAKKKSDGRTAAQPALDISRKEKCYLCKSLVPLGEYQCHVETCLQLANVDRENGTEGMRRPRVCAPVEGKPKQRLRKSKEKGHSQGRLLSLLEQSEHRTTGVERTPKCSEAGAFRMPSPDVEEAGCSRERQSSLSKLNLNESPIKSFVPVSEATNCLVDFKGQFAFRSQTKSGRGRRRKS.

The disordered stretch occupies residues 1 to 27 (MPRRKKKIKEASEGQNLEKKDLETTSS). Residues 1–101 (MPRRKKKIKE…SEQEAKEVNN (101 aa)) form a necessary for transcriptional repression region. Over residues 9–23 (KEASEGQNLEKKDLE) the composition is skewed to basic and acidic residues. K20 participates in a covalent cross-link: Glycyl lysine isopeptide (Lys-Gly) (interchain with G-Cter in SUMO2). S29 is subject to Phosphoserine. Residue K31 forms a Glycyl lysine isopeptide (Lys-Gly) (interchain with G-Cter in SUMO2) linkage. Residues S44 and S46 each carry the phosphoserine modification. The tract at residues 47 to 67 (DGEETKEENGLQKMKTKQSNR) is disordered. Position 51 is a phosphothreonine (T51). Positions 60–78 (MKTKQSNRSKCLAKRKIAQ) match the LR motif motif. Glycyl lysine isopeptide (Lys-Gly) (interchain with G-Cter in SUMO2) cross-links involve residues K75 and K90. 2 UIM domains span residues 80–99 (SEEEQFALALKMSEQEAKEV) and 104–124 (EKEEELLRKAIAESLNSRWSS). 2 disordered regions span residues 93–112 (EQEAKEVNNQEEKEEELLRK) and 119–208 (NSRW…SRPV). The interval 97–103 (KEVNNQE) is UIM-linker. Residues 100–200 (NNQEEKEEEL…EEPLSGSSGS (101 aa)) are necessary for interaction with NR6A1 N-terminus. S140 carries the post-translational modification Phosphoserine. A compositionally biased stretch (basic and acidic residues) spans 177–188 (EEGKEPWDHSEN). Over residues 194–205 (LSGSSGSQDQSS) the composition is skewed to low complexity. A Phosphoserine modification is found at S205. Residue K245 forms a Glycyl lysine isopeptide (Lys-Gly) (interchain with G-Cter in SUMO2) linkage. Residues 270–400 (IGGTVHYYWG…EEEPTTGRGQ (131 aa)) form an AIR region. The interval 356 to 411 (GAREERQGSGASVWHSETKDSQKSPITSLKQRLLLEEEPTTGRGQSSQGLFVEETS) is disordered. Phosphoserine occurs at positions 379, 402, and 427. The tract at residues 400-507 (QSSQGLFVEE…DSRPPAVSAS (108 aa)) is necessary for interaction with NR6A1 C-terminus. Residue K436 forms a Glycyl lysine isopeptide (Lys-Gly) (interchain with G-Cter in SUMO2) linkage. A UBZ4-type zinc finger spans residues 509–536 (RVSCPLCNQDFPPTKIEQHAMYCTGLME). Zn(2+)-binding residues include C512, C515, H527, and C531. The zinc-finger-like region stretch occupies residues 512 to 589 (CPLCNQDFPP…GEYQCHVETC (78 aa)). Glycyl lysine isopeptide (Lys-Gly) (interchain with G-Cter in SUMO2) cross-links involve residues K551, K569, and K616. Residues 611 to 675 (APVEGKPKQR…DVEEAGCSRE (65 aa)) form a disordered region. S636 is modified (phosphoserine). Residues 640 to 653 (QSEHRTTGVERTPK) are compositionally biased toward basic and acidic residues. Phosphoserine occurs at positions 664 and 688. K707 participates in a covalent cross-link: Glycyl lysine isopeptide (Lys-Gly) (interchain with G-Cter in SUMO2).

Belongs to the RAP80 family. Component of the ARISC complex, at least composed of UIMC1/RAP80, ABRAXAS1, BRCC3/BRCC36, BABAM2 and BABAM1/NBA1. Component of the BRCA1-A complex, at least composed of the BRCA1, BARD1, UIMC1/RAP80, ABRAXAS1, BRCC3/BRCC36, BABAM2 and BABAM1/NBA1. In the BRCA1-A complex, interacts directly with ABRAXAS1. Interacts with UBE2I. Interacts with NR6A1. Interacts with ESR1. Interacts with TSP57. Interacts with TRAIP. Sumoylated. In terms of processing, phosphorylated upon DNA damage by ATM or ATR.

The protein localises to the nucleus. Functionally, ubiquitin-binding protein. Specifically recognizes and binds 'Lys-63'-linked ubiquitin. Plays a central role in the BRCA1-A complex by specifically binding 'Lys-63'-linked ubiquitinated histones H2A and H2AX at DNA lesions sites, leading to target the BRCA1-BARD1 heterodimer to sites of DNA damage at double-strand breaks (DSBs). The BRCA1-A complex also possesses deubiquitinase activity that specifically removes 'Lys-63'-linked ubiquitin on histones H2A and H2AX. Also weakly binds monoubiquitin but with much less affinity than 'Lys-63'-linked ubiquitin. May interact with monoubiquitinated histones H2A and H2B; the relevance of such results is however unclear in vivo. Does not bind Lys-48'-linked ubiquitin. May indirectly act as a transcriptional repressor by inhibiting the interaction of NR6A1 with the corepressor NCOR1. The sequence is that of BRCA1-A complex subunit RAP80 (Uimc1) from Rattus norvegicus (Rat).